Reading from the N-terminus, the 74-residue chain is Mitochondrial import receptor subunit TOM6 homolog (74 aa).

Residues 1–20 (MASSGVTVSAAGSASEASEV) show a composition bias toward low complexity. The tract at residues 1–21 (MASSGVTVSAAGSASEASEVP) is disordered. The residue at position 2 (Ala-2) is an N-acetylalanine.

Belongs to the Tom6 family. In terms of assembly, forms part of the preprotein translocase complex of the outer mitochondrial membrane (TOM complex) which consists of at least 7 different proteins (TOMM5, TOMM6, TOMM7, TOMM20, TOMM22, TOMM40 and TOMM70).

The protein localises to the mitochondrion outer membrane. This is Mitochondrial import receptor subunit TOM6 homolog (Tomm6) from Mus musculus (Mouse).